The chain runs to 207 residues: Small ribosomal subunit protein uS4 (207 aa).

The interval 26 to 47 (AINNKNYKPGQQGNSSSISKPS) is disordered. Positions 28–39 (NNKNYKPGQQGN) are enriched in polar residues. The S4 RNA-binding domain occupies 95–158 (RRLDAVVYRL…KQIPIVIGAI (64 aa)).

Belongs to the universal ribosomal protein uS4 family. Part of the 30S ribosomal subunit. Contacts protein S5. The interaction surface between S4 and S5 is involved in control of translational fidelity.

In terms of biological role, one of the primary rRNA binding proteins, it binds directly to 16S rRNA where it nucleates assembly of the body of the 30S subunit. With S5 and S12 plays an important role in translational accuracy. This chain is Small ribosomal subunit protein uS4, found in Orientia tsutsugamushi (strain Boryong) (Rickettsia tsutsugamushi).